Here is a 252-residue protein sequence, read N- to C-terminus: Glycerol-3-phosphate acyltransferase (252 aa).

The next 6 membrane-spanning stretches (helical) occupy residues 6–26, 66–86, 104–124, 140–160, 164–184, and 204–224; these read SVAM…YLIG, ILTL…TYII, AILV…PIFF, ITID…ILLI, MSLS…IPGI, and VIKG…ILIY.

It belongs to the PlsY family. As to quaternary structure, probably interacts with PlsX.

The protein localises to the cell membrane. It catalyses the reaction an acyl phosphate + sn-glycerol 3-phosphate = a 1-acyl-sn-glycero-3-phosphate + phosphate. The protein operates within lipid metabolism; phospholipid metabolism. In terms of biological role, catalyzes the transfer of an acyl group from acyl-phosphate (acyl-PO(4)) to glycerol-3-phosphate (G3P) to form lysophosphatidic acid (LPA). This enzyme utilizes acyl-phosphate as fatty acyl donor, but not acyl-CoA or acyl-ACP. The chain is Glycerol-3-phosphate acyltransferase from Ureaplasma urealyticum serovar 10 (strain ATCC 33699 / Western).